The primary structure comprises 566 residues: Glutamate--tRNA ligase (566 aa).

The 'HIGH' region motif lies at 93–103 (PNPDYTIHLGN).

Belongs to the class-I aminoacyl-tRNA synthetase family. Glutamate--tRNA ligase type 2 subfamily.

The protein resides in the cytoplasm. It carries out the reaction tRNA(Glu) + L-glutamate + ATP = L-glutamyl-tRNA(Glu) + AMP + diphosphate. Its function is as follows. Catalyzes the attachment of glutamate to tRNA(Glu) in a two-step reaction: glutamate is first activated by ATP to form Glu-AMP and then transferred to the acceptor end of tRNA(Glu). The polypeptide is Glutamate--tRNA ligase (Staphylothermus marinus (strain ATCC 43588 / DSM 3639 / JCM 9404 / F1)).